A 124-amino-acid polypeptide reads, in one-letter code: NADPH-dependent 7-cyano-7-deazaguanine reductase (124 aa).

Cysteine 40 acts as the Thioimide intermediate in catalysis. The Proton donor role is filled by aspartate 47. Residues 62–64 (VEL) and 81–82 (HE) contribute to the substrate site.

It belongs to the GTP cyclohydrolase I family. QueF type 1 subfamily.

Its subcellular location is the cytoplasm. It catalyses the reaction 7-aminomethyl-7-carbaguanine + 2 NADP(+) = 7-cyano-7-deazaguanine + 2 NADPH + 3 H(+). It participates in tRNA modification; tRNA-queuosine biosynthesis. Catalyzes the NADPH-dependent reduction of 7-cyano-7-deazaguanine (preQ0) to 7-aminomethyl-7-deazaguanine (preQ1). The chain is NADPH-dependent 7-cyano-7-deazaguanine reductase from Wolinella succinogenes (strain ATCC 29543 / DSM 1740 / CCUG 13145 / JCM 31913 / LMG 7466 / NCTC 11488 / FDC 602W) (Vibrio succinogenes).